Reading from the N-terminus, the 177-residue chain is MRVLGIDPGLTRCGMGVVDGSVGRPLTLVDVNVLRTSADLPVPERLVTIERGVEAWIEEHAPDAVAIERVFARSDVSTVMGTAQASGVAMVVAARRGLPIGLHTPSEVKAAVSGNGRAGKAQVGAMVTRILRLDVMPKPADAADALALAITHIWRGGAQARIDAAVTAARQQVRSRR.

Residues Asp-7, Glu-68, and Asp-141 contribute to the active site. Residues Asp-7, Glu-68, and Asp-141 each contribute to the Mg(2+) site.

Belongs to the RuvC family. As to quaternary structure, homodimer which binds Holliday junction (HJ) DNA. The HJ becomes 2-fold symmetrical on binding to RuvC with unstacked arms; it has a different conformation from HJ DNA in complex with RuvA. In the full resolvosome a probable DNA-RuvA(4)-RuvB(12)-RuvC(2) complex forms which resolves the HJ. Requires Mg(2+) as cofactor.

It localises to the cytoplasm. The catalysed reaction is Endonucleolytic cleavage at a junction such as a reciprocal single-stranded crossover between two homologous DNA duplexes (Holliday junction).. Its function is as follows. The RuvA-RuvB-RuvC complex processes Holliday junction (HJ) DNA during genetic recombination and DNA repair. Endonuclease that resolves HJ intermediates. Cleaves cruciform DNA by making single-stranded nicks across the HJ at symmetrical positions within the homologous arms, yielding a 5'-phosphate and a 3'-hydroxyl group; requires a central core of homology in the junction. The consensus cleavage sequence is 5'-(A/T)TT(C/G)-3'. Cleavage occurs on the 3'-side of the TT dinucleotide at the point of strand exchange. HJ branch migration catalyzed by RuvA-RuvB allows RuvC to scan DNA until it finds its consensus sequence, where it cleaves and resolves the cruciform DNA. This chain is Crossover junction endodeoxyribonuclease RuvC, found in Nocardioides sp. (strain ATCC BAA-499 / JS614).